The chain runs to 895 residues: Zinc finger protein 574 (895 aa).

C2H2-type zinc fingers lie at residues 16-38, 76-98, and 126-148; these read YVCS…QNSH, YQCL…QELH, and YECV…RQTH. Position 164 is a phosphoserine (Ser-164). The C2H2-type 4 zinc-finger motif lies at 214–236; it reads YKCSECSQLFQLPADFLEHQATH. The interval 239-301 is disordered; it reads APVPESQEPA…RARRNNSGEA (63 aa). A compositionally biased stretch (polar residues) spans 247–257; sequence PALQQEVQASS. A compositionally biased stretch (basic and acidic residues) spans 274–287; it reads HSYELRNGEAIGRD. A Phosphoserine modification is found at Ser-298. 4 C2H2-type zinc fingers span residues 309 to 331, 336 to 358, 364 to 386, and 392 to 413; these read LFCS…LRSH, FKCP…LGDH, FLCV…RRAH, and HSCP…RRTH. The interval 434–460 is disordered; the sequence is FPEPAPAETGEPEAPEPPVSEETSAGP. 6 consecutive C2H2-type zinc fingers follow at residues 466 to 489, 495 to 517, 523 to 545, 551 to 573, 579 to 601, and 607 to 630; these read YRCL…RFVH, HKCS…LRTH, FPCP…RLTH, YRCG…RLVH, YRCQ…RYHH, and YKCR…LVVH. The C2H2-type 15; degenerate zinc finger occupies 636 to 659; it reads HRCPSCGAAFPSSLRLREHRCAAA. The C2H2-type 16 zinc finger occupies 667-689; it reads FECGTCGKKVGSAARLQAHEAAH. The tract at residues 687–732 is disordered; that stretch reads AAHAAAGPGEVLAKEPPAPRAPRATRAPVASPAALGGTATASPAPA. Over residues 707–731 the composition is skewed to low complexity; the sequence is APRATRAPVASPAALGGTATASPAP. At Ser-717 the chain carries Phosphoserine. Thr-724 bears the Phosphothreonine mark. Position 728 is a phosphoserine (Ser-728). 4 consecutive C2H2-type zinc fingers follow at residues 737 to 759, 765 to 787, 793 to 815, and 821 to 843; these read LECS…RRIH, YPCP…RRLH, FACE…RRIH, and YSCP…RKTH. Residue Arg-831 is modified to Asymmetric dimethylarginine.

The protein belongs to the krueppel C2H2-type zinc-finger protein family.

It localises to the nucleus. May be involved in transcriptional regulation. This chain is Zinc finger protein 574 (ZNF574), found in Pongo abelii (Sumatran orangutan).